Reading from the N-terminus, the 589-residue chain is PAN2-PAN3 deadenylation complex subunit pan3 (589 aa).

Residues 1–32 (MSVRKNSPASPKPTSRSRESSRSPSVTDLKDH) are disordered. The C3H1-type zinc-finger motif lies at 34 to 63 (KAKRTLCRNILLYGSCKHSENGCAFRHDGP). The short motif at 74-94 (YSVKKKLNAASASFQPVRALP) is the PABPC-interacting motif-2 (PAM-2) element. The segment at 201–457 (EASRQTISAL…NLELFLQNHI (257 aa)) is pseudokinase domain. Residues K255 and 302-309 (DFYPCTTT) each bind ATP. Residues 458-496 (ESFFPIMSSPYVECEKMERKISDAFQHGRFFNILCKIMF) are a coiled coil. Positions 497-589 (IIDNNRASRE…DNVYEMEINS (93 aa)) are knob domain.

Belongs to the protein kinase superfamily. PAN3 family. As to quaternary structure, homodimer. Forms a heterotrimer with a catalytic subunit pan2 to form the poly(A)-nuclease (PAN) deadenylation complex. Interacts (via PAM-2 motif) with poly(A)-binding protein pab1 (via PABC domain), conferring substrate specificity of the enzyme complex.

The protein resides in the cytoplasm. It is found in the nucleus. Its function is as follows. Regulatory subunit of the poly(A)-nuclease (PAN) deadenylation complex, one of two cytoplasmic mRNA deadenylases involved in mRNA turnover. PAN specifically shortens poly(A) tails of RNA and the activity is stimulated by poly(A)-binding protein pab1. PAN deadenylation is followed by rapid degradation of the shortened mRNA tails by the CCR4-NOT complex. Deadenylated mRNAs are then degraded by two alternative mechanisms, namely exosome-mediated 3'-5' exonucleolytic degradation, or deadenylation-dependent mRNA decaping and subsequent 5'-3' exonucleolytic degradation by xrn1. May also be involved in post-transcriptional maturation of mRNA poly(A) tails. ppk26/pan3 acts as a positive regulator for PAN activity, recruiting the catalytic subunit pan2 to mRNA via its interaction with RNA and with pab1. The sequence is that of PAN2-PAN3 deadenylation complex subunit pan3 (ppk26) from Schizosaccharomyces pombe (strain 972 / ATCC 24843) (Fission yeast).